The primary structure comprises 151 residues: 3-hydroxyacyl-[acyl-carrier-protein] dehydratase FabZ (151 aa).

His-54 is a catalytic residue.

It belongs to the thioester dehydratase family. FabZ subfamily.

The protein resides in the cytoplasm. The catalysed reaction is a (3R)-hydroxyacyl-[ACP] = a (2E)-enoyl-[ACP] + H2O. In terms of biological role, involved in unsaturated fatty acids biosynthesis. Catalyzes the dehydration of short chain beta-hydroxyacyl-ACPs and long chain saturated and unsaturated beta-hydroxyacyl-ACPs. This is 3-hydroxyacyl-[acyl-carrier-protein] dehydratase FabZ from Idiomarina loihiensis (strain ATCC BAA-735 / DSM 15497 / L2-TR).